The primary structure comprises 581 residues: Mitosis inhibitor protein kinase mik1 (581 aa).

Disordered stretches follow at residues 43–71 and 148–178; these read GHEE…HTPM and NLTN…PLSP. Polar residues predominate over residues 59–71; that stretch reads KPSNTKRSPHTPM. Residues 160–169 show a composition bias toward basic residues; sequence PCKKGTKIKL. The Protein kinase domain occupies 289 to 561; sequence FQQVKPIHES…LLAMPEMIFI (273 aa). ATP-binding positions include 295-303 and Lys-320; that span reads IHESDFSFV. Asp-417 (proton acceptor) is an active-site residue. Mg(2+) contacts are provided by Asn-422 and Asp-435.

The protein belongs to the protein kinase superfamily. Ser/Thr protein kinase family. WEE1 subfamily.

It catalyses the reaction L-seryl-[protein] + ATP = O-phospho-L-seryl-[protein] + ADP + H(+). The enzyme catalyses L-threonyl-[protein] + ATP = O-phospho-L-threonyl-[protein] + ADP + H(+). Protein kinase that acts both on serines and on tyrosines. It acts as a negative regulator of entry into mitosis (G2 to M transition). Phosphorylates and inhibits cdc2. The protein is Mitosis inhibitor protein kinase mik1 (mik1) of Schizosaccharomyces pombe (strain 972 / ATCC 24843) (Fission yeast).